Here is a 160-residue protein sequence, read N- to C-terminus: Cytochrome b6-f complex subunit 4 (160 aa).

The next 3 membrane-spanning stretches (helical) occupy residues 36-56 (LLYV…ALAV), 95-115 (LLGI…PFIE), and 131-151 (AVFL…TFPI).

It belongs to the cytochrome b family. PetD subfamily. As to quaternary structure, the 4 large subunits of the cytochrome b6-f complex are cytochrome b6, subunit IV (17 kDa polypeptide, PetD), cytochrome f and the Rieske protein, while the 4 small subunits are PetG, PetL, PetM and PetN. The complex functions as a dimer.

It is found in the cellular thylakoid membrane. Its function is as follows. Component of the cytochrome b6-f complex, which mediates electron transfer between photosystem II (PSII) and photosystem I (PSI), cyclic electron flow around PSI, and state transitions. The chain is Cytochrome b6-f complex subunit 4 from Rippkaea orientalis (strain PCC 8801 / RF-1) (Cyanothece sp. (strain PCC 8801)).